The sequence spans 262 residues: MKDMSLVNSKVLLVGSARGIGFSVLEHLLQAGAQVMAADCEWQLLLEQSESLLGRYPDQLTLKKLDLAEPEAVREQVNQWAEQVAGFDHLVCCAGILHVAPLHEMPMEQVSSIFTVNAFGVLACMQGVASSMKARQQGSMVIIGSNAANTPRMSIGAYGASKAALHMLVKCIGMELAPYGIRCNLVSPGSTRTAMQQQLWTEQYGEAQVIAGDAAQFRLGIPLNKIAEPADIAQAVLFLLSDNAGHITLHDLRVDGGATLDH.

12–36 (LLVGSARGIGFSVLEHLLQAGAQVM) is a binding site for NAD(+). Ser145 lines the substrate pocket. The active-site Proton acceptor is the Tyr158.

This sequence belongs to the short-chain dehydrogenases/reductases (SDR) family.

The enzyme catalyses (2S,3S)-2,3-dihydroxy-2,3-dihydrobenzoate + NAD(+) = 2,3-dihydroxybenzoate + NADH + H(+). It functions in the pathway siderophore biosynthesis; vibriobactin biosynthesis. Its function is as follows. Involved in an early step of the biosynthesis of the catechol siderophore vibriobactin. Vibriobactin is a chelating compound involved in transporting iron from the bacterial environment into the cell cytoplasm. In Vibrio cholerae serotype O1 (strain ATCC 39315 / El Tor Inaba N16961), this protein is Vibriobactin-specific 2,3-dihydro-2,3-dihydroxybenzoate dehydrogenase (vibA).